Here is a 145-residue protein sequence, read N- to C-terminus: Superoxide dismutase [Mn/Fe] (145 aa).

Fe(3+) contacts are provided by His-10 and His-64. Mn(2+)-binding residues include His-10 and His-64. Residues 126 to 145 (TSTANQDTPISEGKKPILGL) form a disordered region.

This sequence belongs to the iron/manganese superoxide dismutase family. It depends on Mn(2+) as a cofactor. Fe(3+) serves as cofactor.

The catalysed reaction is 2 superoxide + 2 H(+) = H2O2 + O2. Destroys superoxide anion radicals which are normally produced within the cells and which are toxic to biological systems. Catalyzes the dismutation of superoxide anion radicals into O2 and H2O2 by successive reduction and oxidation of the transition metal ion at the active site. The polypeptide is Superoxide dismutase [Mn/Fe] (sodA) (Streptococcus mitis).